A 97-amino-acid polypeptide reads, in one-letter code: Large ribosomal subunit protein uL23 (97 aa).

It belongs to the universal ribosomal protein uL23 family. As to quaternary structure, part of the 50S ribosomal subunit. Contacts protein L29, and trigger factor when it is bound to the ribosome.

In terms of biological role, one of the early assembly proteins it binds 23S rRNA. One of the proteins that surrounds the polypeptide exit tunnel on the outside of the ribosome. Forms the main docking site for trigger factor binding to the ribosome. The protein is Large ribosomal subunit protein uL23 of Sinorhizobium medicae (strain WSM419) (Ensifer medicae).